Reading from the N-terminus, the 202-residue chain is Protein-methionine-sulfoxide reductase heme-binding subunit MsrQ (202 aa).

6 helical membrane-spanning segments follow: residues 8-28, 42-62, 75-95, 110-130, 147-167, and 169-189; these read LAVFLGALAVPAWWLYQAWIF, LGLGALVLLLLTLAMTPLQKL, LGLWCFTYVLLHLSAYCVFIL, PYIIVGMLGFVCLFLLAITSN, LVYLILGLGLLHMLWVVRADL, and EWTLYAVVGASLMLLRLPSIA.

The protein belongs to the MsrQ family. Heterodimer of a catalytic subunit (MsrP) and a heme-binding subunit (MsrQ). FMN serves as cofactor. Requires heme b as cofactor.

It localises to the cell inner membrane. Part of the MsrPQ system that repairs oxidized periplasmic proteins containing methionine sulfoxide residues (Met-O), using respiratory chain electrons. Thus protects these proteins from oxidative-stress damage caused by reactive species of oxygen and chlorine generated by the host defense mechanisms. MsrPQ is essential for the maintenance of envelope integrity under bleach stress, rescuing a wide series of structurally unrelated periplasmic proteins from methionine oxidation. MsrQ provides electrons for reduction to the reductase catalytic subunit MsrP, using the quinone pool of the respiratory chain. The polypeptide is Protein-methionine-sulfoxide reductase heme-binding subunit MsrQ (Pseudomonas aeruginosa (strain UCBPP-PA14)).